A 299-amino-acid polypeptide reads, in one-letter code: N-acetylaspartate synthetase (299 aa).

Pro residues predominate over residues 44-57 (AAPGPAAAPPPAAG). Positions 44-70 (AAPGPAAAPPPAAGPQPHGGTGGAGPP) are disordered. Gly residues predominate over residues 60-70 (PHGGTGGAGPP). The chain crosses the membrane as a helical span at residues 118–138 (YALLAALCFAVTRSLLLTCLV). The N-acetyltransferase domain maps to 143–280 (LALRYYYSRK…VLPGMTLSLA (138 aa)).

The protein belongs to the NAT8 family. As to expression, expressed in brain, kidney, liver and spleen. In brain, present in neurons but not in astrocytes (at protein level). Expressed in brain, thymus and spleen.

It is found in the cytoplasm. It localises to the microsome membrane. The protein localises to the mitochondrion membrane. The protein resides in the endoplasmic reticulum membrane. The enzyme catalyses L-aspartate + acetyl-CoA = N-acetyl-L-aspartate + CoA + H(+). Its activity is regulated as follows. Aminooxyacetic acid (AOAA) blocks its activity in both cytoplasm and mitochondria. In terms of biological role, catalyzes the synthesis of N-acetylaspartate acid (NAA) from L-aspartate and acetyl-CoA. Promotes dopamine uptake by regulating TNF-alpha expression. Attenuates methamphetamine-induced inhibition of dopamine uptake. The polypeptide is N-acetylaspartate synthetase (Nat8l) (Mus musculus (Mouse)).